Here is a 216-residue protein sequence, read N- to C-terminus: Small ribosomal subunit protein uS3c (216 aa).

The region spanning 43 to 118 (INNYVKKNMR…KLNITITRIE (76 aa)) is the KH type-2 domain.

The protein belongs to the universal ribosomal protein uS3 family. In terms of assembly, part of the 30S ribosomal subunit.

It localises to the plastid. This Cuscuta reflexa (Southern Asian dodder) protein is Small ribosomal subunit protein uS3c (rps3).